Consider the following 415-residue polypeptide: uncharacterized protein (415 aa).

Helical transmembrane passes span 20-40 (MAYL…FGIL), 43-63 (LMPI…PAIA), 78-98 (IPIL…TPYI), 109-129 (LPNI…VIAF), 155-175 (VILV…LSIS), 243-263 (IVIM…SSLI), 300-320 (IFSS…LIAF), 328-348 (GILC…YTLI), 360-380 (ISFY…LILV), and 388-408 (GSLA…FAIL).

The protein belongs to the polysaccharide synthase family.

The protein localises to the cell membrane. This is an uncharacterized protein from Methanocaldococcus jannaschii (strain ATCC 43067 / DSM 2661 / JAL-1 / JCM 10045 / NBRC 100440) (Methanococcus jannaschii).